The chain runs to 532 residues: Sodium-dependent lysophosphatidylcholine symporter 1-A (532 aa).

The Cytoplasmic portion of the chain corresponds to 1–40 (MARGEGAEQFSSGLLPTAKSVTQNEIKMVKLPKQQERKRA). A helical membrane pass occupies residues 41–70 (LTVWSKVCFAIGGAPYQITGTALGFFLQIF). Topologically, residues 71–81 (LLDVAQLNPLN) are extracellular. Residues 82–102 (ASVILFVGRAWDAVTDPTVGF) form a helical membrane-spanning segment. Residues 103-114 (LVSRTPWTRHGR) lie on the Cytoplasmic side of the membrane. The helical transmembrane segment at 115–134 (MMPWILVSTIPAVLCYFLIW) threads the bilayer. The Extracellular portion of the chain corresponds to 135–144 (VVPPIEQGKM). A helical transmembrane segment spans residues 145-169 (MWYLLFYCLFQTLQTCFHVPYSALT). Topologically, residues 170-176 (MFISTEQ) are cytoplasmic. The helical transmembrane segment at 177 to 208 (RERDSATAYRMTVEVFGTVVGTAIQGQIVGMA) threads the bilayer. At 209–232 (NTPCKNNTSPNNSSNDLIQSNNSH) the chain is on the extracellular side. Cysteine 212 and cysteine 464 are oxidised to a cystine. N-linked (GlcNAc...) asparagine glycans are attached at residues asparagine 214, asparagine 220, and asparagine 229. Residues 233 to 266 (IPLKSNIFDERCAYMIASAVISLIYVVCAAVLFF) form a helical membrane-spanning segment. The Cytoplasmic segment spans residues 267–297 (GVREQDVQGELKAQKRVSFQKGLRLVMGHGP). The helical transmembrane segment at 298–324 (YVKLVLAFLFTSLAFMLLEGNFAVFIK) threads the bilayer. Topologically, residues 325–335 (YTLGFREDFQN) are extracellular. A helical transmembrane segment spans residues 336–354 (ILLVIMVSATVSIPMWQWF). Residues 355 to 358 (LCRF) are Cytoplasmic-facing. The helical transmembrane segment at 359–380 (GKKTAVYIGITWAVPFMILVVS) threads the bilayer. The Extracellular portion of the chain corresponds to 381-383 (VNS). A helical membrane pass occupies residues 384-420 (SLIVSYIVSIAAGVSVGAAFLLPWSMLPDVVDDFKLQ). The Cytoplasmic segment spans residues 421 to 430 (NPTSQGHEAI). The chain crosses the membrane as a helical span at residues 431 to 457 (FYSFYVFFTKFASGVSLGVSTLALSFA). The Extracellular portion of the chain corresponds to 458–469 (GYETGVCVQSDS). Residues 470–493 (VNLTLKLLVSAAPVSLIALGLLIF) form a helical membrane-spanning segment. Over 494-532 (MTYPIDEERREYNNKQLQLLLRNEEEEDEMEVLKPDITA) the chain is Cytoplasmic.

This sequence belongs to the major facilitator superfamily. Expressed in the developing nervous system.

Its subcellular location is the cell membrane. It is found in the endoplasmic reticulum membrane. It catalyses the reaction a 1-acyl-sn-glycero-3-phosphocholine(in) + Na(+)(in) = a 1-acyl-sn-glycero-3-phosphocholine(out) + Na(+)(out). It carries out the reaction 1-(4Z,7Z,10Z,13Z,16Z,19Z-docosahexaenoyl)-sn-glycero-3-phosphocholine(in) + Na(+)(in) = 1-(4Z,7Z,10Z,13Z,16Z,19Z-docosahexaenoyl)-sn-glycero-3-phosphocholine(out) + Na(+)(out). The catalysed reaction is 1-(9Z-octadecenoyl)-sn-glycero-3-phosphocholine(in) + Na(+)(in) = 1-(9Z-octadecenoyl)-sn-glycero-3-phosphocholine(out) + Na(+)(out). The enzyme catalyses 1-hexadecanoyl-sn-glycero-3-phosphocholine(in) + Na(+)(in) = 1-hexadecanoyl-sn-glycero-3-phosphocholine(out) + Na(+)(out). It catalyses the reaction a 1-acyl-sn-glycero-3-phosphoethanolamine(in) + Na(+)(in) = a 1-acyl-sn-glycero-3-phosphoethanolamine(out) + Na(+)(out). Sodium-dependent lysophosphatidylcholine (LPC) symporter, which plays an essential role for blood-brain barrier formation and function. Specifically expressed in endothelium of the blood-brain barrier of micro-vessels and transports LPC into the brain. Transport of LPC is essential because it constitutes the major mechanism by which docosahexaenoic acid (DHA), an omega-3 fatty acid that is essential for normal brain growth and cognitive function, enters the brain. Transports LPC carrying long-chain fatty acids such LPC oleate and LPC palmitate with a minimum acyl chain length of 14 carbons. Does not transport docosahexaenoic acid in unesterified fatty acid. In Danio rerio (Zebrafish), this protein is Sodium-dependent lysophosphatidylcholine symporter 1-A (mfsd2aa).